The primary structure comprises 688 residues: MALLYLSTRSSLKKTGARCLSSSSILYRGQNLTEKIVQKYAVGLADDKKVFSGDYVTIKPAHCMSHDNSWPVATKFMGLGATNVHDNRQIVCTLDHDVQNKSEKNLEKYHNIENFAKEQGIDFYPAGRGIGHQIMIEEGYAYPLNLTVASDSHSNTYGGIGSLGTPIVRTDAASIWATGQTWWQIPPVAKVELVGQLPKGATGKDIIVALCGIFNNDEVLNHAIEFTGEGVKNLSVDYRLTIANMTTEWGALSGLFPVDETLVNFYDERVKKLPQPHPRVNENTVKNLSENKVNSDNDAVYAKHLVVDLSSLSPYISGPNSVKVSTSLHDLSKQNIKINKAYLVSCTNSRLSDIKAAADIIKGHKVAEGVEFYVAAASSNVQKDAEAIGAWQDIIDAGAKPLPAGCGPCIGLGTGLLEDGEVGISATNRNFKGRMGSKDALAYLASPEVVAASAVLGKIGGPEELQGNPVPTNPEIVRSITSNESTETVDPDASGSSVDVLDGFPQSIEGELILCDADNINTDGIYPGKYTYQDDIPRSKMAEVCMENYDSEFKQKTKAGDIIISGYNFGTGSSREQAATAILARDMKLVVAGSFGNIFSRNSINNALLTLEIPALINKLREKYAQSNELTIRTGWFLKWDVTKNQVTVSDSEGNLILTQKVGELGTNLQDIIVKGGLEGWVKAQLKN.

Residues methionine 1–cysteine 19 constitute a mitochondrion transit peptide. Residues cysteine 346, cysteine 406, and cysteine 409 each contribute to the [4Fe-4S] cluster site.

It belongs to the aconitase/IPM isomerase family. [4Fe-4S] cluster is required as a cofactor.

It is found in the mitochondrion. It catalyses the reaction (2R,3S)-homoisocitrate = cis-homoaconitate + H2O. The protein operates within amino-acid biosynthesis; L-lysine biosynthesis via AAA pathway; L-alpha-aminoadipate from 2-oxoglutarate: step 3/5. Its function is as follows. Catalyzes the reversible hydration of cis-homoaconitate to (2R,3S)-homoisocitrate, a step in the alpha-aminoadipate pathway for lysine biosynthesis. The chain is Homoaconitase, mitochondrial (LYS4) from Debaryomyces hansenii (strain ATCC 36239 / CBS 767 / BCRC 21394 / JCM 1990 / NBRC 0083 / IGC 2968) (Yeast).